Consider the following 353-residue polypeptide: MAERGAHITTTSASDDRPSIFEVVAQESLMAAARPALHHIVKVLAESNPSRYGTLWRWFDELYTLLDWLLQQHYLSWASASFSENFYGLKRITLGKEVGQRNLPRKEYWKSLLLLVLIPYLRVKLEKIVNRLREEQDYSIQNPTSFHKRCYKAILASYPFVKLGWEAWFLFYQLRYILWNGKNHSPLLRLAGVQLTRLTMEDLHAMEKQEEMTNTLSNAVSLSQRIRSILKKALGAVALSVSSSLSLGVFFLQFLDWWYSAENQETLKSLNNLPVPPPPIHFELETYSPLLPKLKTVCPLCRKVRVNDTALGTSGYVFCYRCAYYYVKTHQRCPVSGYPTELQHLIKLYTPDG.

Residues 1–19 (MAERGAHITTTSASDDRPS) are Peroxisomal matrix-facing. The chain crosses the membrane as a helical span at residues 20–47 (IFEVVAQESLMAAARPALHHIVKVLAES). The Cytoplasmic portion of the chain corresponds to 48–51 (NPSR). A helical transmembrane segment spans residues 52–76 (YGTLWRWFDELYTLLDWLLQQHYLS). The Peroxisomal matrix portion of the chain corresponds to 77 to 104 (WASASFSENFYGLKRITLGKEVGQRNLP). Residues 105–134 (RKEYWKSLLLLVLIPYLRVKLEKIVNRLRE) form a helical membrane-spanning segment. The Cytoplasmic portion of the chain corresponds to 135-139 (EQDYS). The helical transmembrane segment at 140–178 (IQNPTSFHKRCYKAILASYPFVKLGWEAWFLFYQLRYIL) threads the bilayer. Residues 179–243 (WNGKNHSPLL…LGAVALSVSS (65 aa)) are Peroxisomal matrix-facing. A helical transmembrane segment spans residues 244–271 (SLSLGVFFLQFLDWWYSAENQETLKSLN). Topologically, residues 272 to 353 (NLPVPPPPIH…HLIKLYTPDG (82 aa)) are cytoplasmic. Zn(2+) contacts are provided by Cys-298, Cys-301, Cys-319, and Cys-322. An RING-type; degenerate zinc finger spans residues 298–337 (CPLCRKVRVNDTALGTSGYVFCYRCAYYYVKTHQRCPVSG).

This sequence belongs to the pex2/pex10/pex12 family. As to quaternary structure, component of the PEX2-PEX10-PEX12 retrotranslocation channel.

It is found in the peroxisome membrane. It functions in the pathway protein modification; protein ubiquitination. Functionally, component of a retrotranslocation channel required for peroxisome organization by mediating export of the PEX5 receptor from peroxisomes to the cytosol, thereby promoting PEX5 recycling. The retrotranslocation channel is composed of PEX2, PEX10 and PEX12; each subunit contributing transmembrane segments that coassemble into an open channel that specifically allows the passage of PEX5 through the peroxisomal membrane. PEX12 also regulates PEX5 recycling by activating the E3 ubiquitin-protein ligase activity of PEX10. When PEX5 recycling is compromised, PEX12 stimulates PEX10-mediated polyubiquitination of PEX5, leading to its subsequent degradation. The chain is Peroxisome assembly protein 12-A from Xenopus laevis (African clawed frog).